A 345-amino-acid polypeptide reads, in one-letter code: uncharacterized protein (345 aa).

A domain (TBDR plug) is located at residue Met1. A TBDR beta-barrel domain is found at 1–345 (MDLGPIYNTR…EVILNTKIEF (345 aa)). The TonB C-terminal box signature appears at 328–345 (PVALGYAREVILNTKIEF).

This sequence belongs to the TonB-dependent receptor family.

It is found in the cell outer membrane. This is an uncharacterized protein from Haemophilus influenzae (strain ATCC 51907 / DSM 11121 / KW20 / Rd).